The chain runs to 461 residues: ATP synthase subunit beta (461 aa).

151–158 is an ATP binding site; sequence GGAGVGKT.

Belongs to the ATPase alpha/beta chains family. As to quaternary structure, F-type ATPases have 2 components, CF(1) - the catalytic core - and CF(0) - the membrane proton channel. CF(1) has five subunits: alpha(3), beta(3), gamma(1), delta(1), epsilon(1). CF(0) has three main subunits: a(1), b(2) and c(9-12). The alpha and beta chains form an alternating ring which encloses part of the gamma chain. CF(1) is attached to CF(0) by a central stalk formed by the gamma and epsilon chains, while a peripheral stalk is formed by the delta and b chains.

It localises to the cell inner membrane. It catalyses the reaction ATP + H2O + 4 H(+)(in) = ADP + phosphate + 5 H(+)(out). Produces ATP from ADP in the presence of a proton gradient across the membrane. The catalytic sites are hosted primarily by the beta subunits. This is ATP synthase subunit beta from Pseudoalteromonas translucida (strain TAC 125).